Here is a 92-residue protein sequence, read N- to C-terminus: Small ribosomal subunit protein uS19c (92 aa).

The protein belongs to the universal ribosomal protein uS19 family.

It is found in the plastid. The protein resides in the chloroplast. Functionally, protein S19 forms a complex with S13 that binds strongly to the 16S ribosomal RNA. The polypeptide is Small ribosomal subunit protein uS19c (Daucus carota (Wild carrot)).